We begin with the raw amino-acid sequence, 196 residues long: 7-methyl-GTP pyrophosphatase (196 aa).

Aspartate 72 (proton acceptor) is an active-site residue.

This sequence belongs to the Maf family. YceF subfamily. The cofactor is a divalent metal cation.

The protein localises to the cytoplasm. It catalyses the reaction N(7)-methyl-GTP + H2O = N(7)-methyl-GMP + diphosphate + H(+). Its function is as follows. Nucleoside triphosphate pyrophosphatase that hydrolyzes 7-methyl-GTP (m(7)GTP). May have a dual role in cell division arrest and in preventing the incorporation of modified nucleotides into cellular nucleic acids. The polypeptide is 7-methyl-GTP pyrophosphatase (Neisseria gonorrhoeae (strain ATCC 700825 / FA 1090)).